The chain runs to 74 residues: uncharacterized protein (74 aa).

Residues 54–72 (LIIPRFLLLIYSVIQCLFL) form a helical membrane-spanning segment.

The protein resides in the membrane. This is an uncharacterized protein from Saccharomyces cerevisiae (strain ATCC 204508 / S288c) (Baker's yeast).